Here is a 121-residue protein sequence, read N- to C-terminus: Large ribosomal subunit protein bL12 (121 aa).

It belongs to the bacterial ribosomal protein bL12 family. Homodimer. Part of the ribosomal stalk of the 50S ribosomal subunit. Forms a multimeric L10(L12)X complex, where L10 forms an elongated spine to which 2 to 4 L12 dimers bind in a sequential fashion. Binds GTP-bound translation factors.

Its function is as follows. Forms part of the ribosomal stalk which helps the ribosome interact with GTP-bound translation factors. Is thus essential for accurate translation. This is Large ribosomal subunit protein bL12 from Pseudomonas fluorescens (strain Pf0-1).